Reading from the N-terminus, the 272-residue chain is Formamidopyrimidine-DNA glycosylase (272 aa).

The Schiff-base intermediate with DNA role is filled by Pro2. Catalysis depends on Glu3, which acts as the Proton donor. The active-site Proton donor; for beta-elimination activity is the Lys58. His94, Arg112, and Arg153 together coordinate DNA. The FPG-type zinc finger occupies 238–272 (FVYDRAGEPCRVCGAPIRQIVQGQRSTYFCPNCQR). Arg262 serves as the catalytic Proton donor; for delta-elimination activity.

It belongs to the FPG family. As to quaternary structure, monomer. It depends on Zn(2+) as a cofactor.

It carries out the reaction Hydrolysis of DNA containing ring-opened 7-methylguanine residues, releasing 2,6-diamino-4-hydroxy-5-(N-methyl)formamidopyrimidine.. The enzyme catalyses 2'-deoxyribonucleotide-(2'-deoxyribose 5'-phosphate)-2'-deoxyribonucleotide-DNA = a 3'-end 2'-deoxyribonucleotide-(2,3-dehydro-2,3-deoxyribose 5'-phosphate)-DNA + a 5'-end 5'-phospho-2'-deoxyribonucleoside-DNA + H(+). In terms of biological role, involved in base excision repair of DNA damaged by oxidation or by mutagenic agents. Acts as a DNA glycosylase that recognizes and removes damaged bases. Has a preference for oxidized purines, such as 7,8-dihydro-8-oxoguanine (8-oxoG). Has AP (apurinic/apyrimidinic) lyase activity and introduces nicks in the DNA strand. Cleaves the DNA backbone by beta-delta elimination to generate a single-strand break at the site of the removed base with both 3'- and 5'-phosphates. This chain is Formamidopyrimidine-DNA glycosylase, found in Burkholderia mallei (strain NCTC 10229).